The chain runs to 357 residues: Spore wall and anchoring disk complex protein EnP1 (357 aa).

Positions 1-16 are cleaved as a signal peptide; the sequence is MKLLGFLIVGLSAISA. Asparagine 47 is a glycosylation site (N-linked (GlcNAc...) asparagine). The short motif at 150–158 is the HBM1 element; that stretch reads ERRPHYKKI. The HBM2 motif lies at 329 to 334; the sequence is LKKVRG.

Its subcellular location is the spore wall. It is found in the spore. The protein localises to the perispore. In terms of biological role, spore wall protein involved in the adhesion to host cells surface glycoaminoglycans (GAGs). Microsporidian spore adherence is an integral part of activation and host cell invasion which requires the extrusion at the spore apex of a very long and coiled structure, the polar tube, through which the sporoplasm is pushed to enter into the potential host cell. The protein is Spore wall and anchoring disk complex protein EnP1 (EnP1) of Encephalitozoon cuniculi (strain GB-M1) (Microsporidian parasite).